A 186-amino-acid chain; its full sequence is Elongation factor P (186 aa).

Belongs to the elongation factor P family.

Its subcellular location is the cytoplasm. It functions in the pathway protein biosynthesis; polypeptide chain elongation. Its function is as follows. Involved in peptide bond synthesis. Stimulates efficient translation and peptide-bond synthesis on native or reconstituted 70S ribosomes in vitro. Probably functions indirectly by altering the affinity of the ribosome for aminoacyl-tRNA, thus increasing their reactivity as acceptors for peptidyl transferase. This chain is Elongation factor P, found in Brucella ovis (strain ATCC 25840 / 63/290 / NCTC 10512).